A 468-amino-acid chain; its full sequence is 3-isopropylmalate dehydratase large subunit (468 aa).

[4Fe-4S] cluster is bound by residues C349, C409, and C412.

This sequence belongs to the aconitase/IPM isomerase family. LeuC type 1 subfamily. As to quaternary structure, heterodimer of LeuC and LeuD. [4Fe-4S] cluster is required as a cofactor.

It catalyses the reaction (2R,3S)-3-isopropylmalate = (2S)-2-isopropylmalate. It participates in amino-acid biosynthesis; L-leucine biosynthesis; L-leucine from 3-methyl-2-oxobutanoate: step 2/4. Functionally, catalyzes the isomerization between 2-isopropylmalate and 3-isopropylmalate, via the formation of 2-isopropylmaleate. This chain is 3-isopropylmalate dehydratase large subunit, found in Shewanella baltica (strain OS185).